Consider the following 445-residue polypeptide: Exodeoxyribonuclease 7 large subunit (445 aa).

It belongs to the XseA family. Heterooligomer composed of large and small subunits.

The protein localises to the cytoplasm. The catalysed reaction is Exonucleolytic cleavage in either 5'- to 3'- or 3'- to 5'-direction to yield nucleoside 5'-phosphates.. Its function is as follows. Bidirectionally degrades single-stranded DNA into large acid-insoluble oligonucleotides, which are then degraded further into small acid-soluble oligonucleotides. The protein is Exodeoxyribonuclease 7 large subunit of Xanthomonas euvesicatoria pv. vesicatoria (strain 85-10) (Xanthomonas campestris pv. vesicatoria).